The sequence spans 223 residues: DNA mismatch repair protein MutH (223 aa).

The protein belongs to the MutH family.

The protein localises to the cytoplasm. Functionally, sequence-specific endonuclease that cleaves unmethylated GATC sequences. It is involved in DNA mismatch repair. This Shewanella sp. (strain ANA-3) protein is DNA mismatch repair protein MutH.